The primary structure comprises 340 residues: Dihydroorotase (340 aa).

2 residues coordinate Zn(2+): histidine 14 and histidine 16. Substrate contacts are provided by residues 16–18 and asparagine 42; that span reads HLR. Residues lysine 100, histidine 137, and histidine 175 each contribute to the Zn(2+) site. Lysine 100 is modified (N6-carboxylysine). Residue histidine 137 participates in substrate binding. Residue leucine 220 coordinates substrate. Aspartate 248 provides a ligand contact to Zn(2+). The active site involves aspartate 248. Residues histidine 252 and alanine 264 each contribute to the substrate site.

It belongs to the metallo-dependent hydrolases superfamily. DHOase family. Class II DHOase subfamily. In terms of assembly, homodimer. Zn(2+) serves as cofactor.

It carries out the reaction (S)-dihydroorotate + H2O = N-carbamoyl-L-aspartate + H(+). The protein operates within pyrimidine metabolism; UMP biosynthesis via de novo pathway; (S)-dihydroorotate from bicarbonate: step 3/3. Functionally, catalyzes the reversible cyclization of carbamoyl aspartate to dihydroorotate. The sequence is that of Dihydroorotase from Sphingopyxis alaskensis (strain DSM 13593 / LMG 18877 / RB2256) (Sphingomonas alaskensis).